Consider the following 186-residue polypeptide: Cytochrome b6-f complex iron-sulfur subunit (186 aa).

The helical transmembrane segment at 16 to 38 threads the bilayer; the sequence is LLSFVTGGAIAATTAATLYPVVL. One can recognise a Rieske domain in the interval 74 to 163; that stretch reads GEPVLTLGLD…ATVSDDKVLI (90 aa). Residues cysteine 109, histidine 111, cysteine 127, and histidine 130 each coordinate [2Fe-2S] cluster. Cysteine 114 and cysteine 129 are disulfide-bonded.

It belongs to the Rieske iron-sulfur protein family. As to quaternary structure, the 4 large subunits of the cytochrome b6-f complex are cytochrome b6, subunit IV (17 kDa polypeptide, PetD), cytochrome f and the Rieske protein, while the 4 small subunits are PetG, PetL, PetM and PetN. The complex functions as a dimer. [2Fe-2S] cluster is required as a cofactor.

Its subcellular location is the cell inner membrane. The enzyme catalyses 2 oxidized [plastocyanin] + a plastoquinol + 2 H(+)(in) = 2 reduced [plastocyanin] + a plastoquinone + 4 H(+)(out). Functionally, component of the cytochrome b6-f complex, which mediates electron transfer between photosystem II (PSII) and photosystem I (PSI), cyclic electron flow around PSI, and state transitions. In Gloeobacter violaceus (strain ATCC 29082 / PCC 7421), this protein is Cytochrome b6-f complex iron-sulfur subunit.